A 489-amino-acid polypeptide reads, in one-letter code: Rhamnulokinase (489 aa).

13 to 17 (ASSGR) provides a ligand contact to ATP. Cysteines 68 and 222 form a disulfide. Substrate-binding positions include glycine 83 and 236-238 (HDT). Aspartate 237 (proton acceptor) is an active-site residue. Position 259 (threonine 259) interacts with ATP. Asparagine 296 contributes to the substrate binding site. Glutamine 304 serves as a coordination point for ATP. A disulfide bridge links cysteine 353 with cysteine 370. Glycine 402 is a binding site for ATP. Residues cysteine 413 and cysteine 417 are joined by a disulfide bond.

It belongs to the rhamnulokinase family. As to quaternary structure, monomer. The cofactor is Mg(2+).

It catalyses the reaction L-rhamnulose + ATP = L-rhamnulose 1-phosphate + ADP + H(+). The protein operates within carbohydrate degradation; L-rhamnose degradation; glycerone phosphate from L-rhamnose: step 2/3. In terms of biological role, involved in the catabolism of L-rhamnose (6-deoxy-L-mannose). Catalyzes the transfer of the gamma-phosphate group from ATP to the 1-hydroxyl group of L-rhamnulose to yield L-rhamnulose 1-phosphate. The polypeptide is Rhamnulokinase (Escherichia coli (strain SE11)).